The sequence spans 327 residues: Aspartate--ammonia ligase (327 aa).

Belongs to the class-II aminoacyl-tRNA synthetase family. AsnA subfamily.

It is found in the cytoplasm. The catalysed reaction is L-aspartate + NH4(+) + ATP = L-asparagine + AMP + diphosphate + H(+). The protein operates within amino-acid biosynthesis; L-asparagine biosynthesis; L-asparagine from L-aspartate (ammonia route): step 1/1. This chain is Aspartate--ammonia ligase, found in Bacillus cereus (strain AH820).